The following is a 161-amino-acid chain: Crossover junction endodeoxyribonuclease RuvC (161 aa).

Residues Asp9, Glu69, and His144 contribute to the active site. Mg(2+) contacts are provided by Asp9, Glu69, and His144.

It belongs to the RuvC family. Homodimer which binds Holliday junction (HJ) DNA. The HJ becomes 2-fold symmetrical on binding to RuvC with unstacked arms; it has a different conformation from HJ DNA in complex with RuvA. In the full resolvosome a probable DNA-RuvA(4)-RuvB(12)-RuvC(2) complex forms which resolves the HJ. Mg(2+) serves as cofactor.

The protein resides in the cytoplasm. It carries out the reaction Endonucleolytic cleavage at a junction such as a reciprocal single-stranded crossover between two homologous DNA duplexes (Holliday junction).. The RuvA-RuvB-RuvC complex processes Holliday junction (HJ) DNA during genetic recombination and DNA repair. Endonuclease that resolves HJ intermediates. Cleaves cruciform DNA by making single-stranded nicks across the HJ at symmetrical positions within the homologous arms, yielding a 5'-phosphate and a 3'-hydroxyl group; requires a central core of homology in the junction. The consensus cleavage sequence is 5'-(A/T)TT(C/G)-3'. Cleavage occurs on the 3'-side of the TT dinucleotide at the point of strand exchange. HJ branch migration catalyzed by RuvA-RuvB allows RuvC to scan DNA until it finds its consensus sequence, where it cleaves and resolves the cruciform DNA. The protein is Crossover junction endodeoxyribonuclease RuvC of Borrelia turicatae (strain 91E135).